Reading from the N-terminus, the 172-residue chain is MDLTNYIASIKDYPKAGITFRDISPLMADGKAYSYAIREIAQYACDKDIDMVVGPEARGFIIGCPVAVELGIGFAPVRKPGKLPRDVVSADYEKEYGLDTLTMHADAIKPGQRVLIVDDLLATGGTVKATIEMIEKLGGIVAGCAFLIELKGLNGRHAIRNYDYKVLMQFPG.

The protein belongs to the purine/pyrimidine phosphoribosyltransferase family. As to quaternary structure, homodimer.

It is found in the cytoplasm. The enzyme catalyses AMP + diphosphate = 5-phospho-alpha-D-ribose 1-diphosphate + adenine. Its pathway is purine metabolism; AMP biosynthesis via salvage pathway; AMP from adenine: step 1/1. Its function is as follows. Catalyzes a salvage reaction resulting in the formation of AMP, that is energically less costly than de novo synthesis. This chain is Adenine phosphoribosyltransferase, found in Streptococcus pyogenes serotype M5 (strain Manfredo).